The primary structure comprises 465 residues: Phosphatidylserine synthase 1 (465 aa).

The Cytoplasmic portion of the chain corresponds to 1 to 35; it reads MATTFRSQTLSKDDVNYRMHFRMINEQQVEDITIQ. A helical membrane pass occupies residues 36-56; it reads FFYKPHTISLLTVTVLSLMYF. The Lumenal segment spans residues 57 to 70; the sequence is AFTRDDGDPDSNLR. The chain crosses the membrane as a helical span at residues 71–91; the sequence is VGLILLVSFFLVISVLAFPNG. At 92 to 102 the chain is on the cytoplasmic side; the sequence is PFTRPHPAIWR. A helical transmembrane segment spans residues 103 to 123; that stretch reads IVFGLSVLYFLFLVFIIFLNW. Over 124 to 286 the chain is Lumenal; sequence DQVKALMFWL…WLDPKSSLQR (163 aa). Residues 287–307 traverse the membrane as a helical segment; it reads VMGVYLFMIIWQLTELNTFFL. Residues 308–309 are Cytoplasmic-facing; the sequence is KH. The helical transmembrane segment at 310-330 threads the bilayer; the sequence is IFVFPACHALSWCRILFIGII. The Lumenal portion of the chain corresponds to 331–355; the sequence is TAPTVRQYYAYLTDTQCKRVGTQCW. Residues 356–376 form a helical membrane-spanning segment; it reads VFGAIAFLEALACIKFGQDLF. Residues 377–380 lie on the Cytoplasmic side of the membrane; that stretch reads SKTQ. The helical transmembrane segment at 381-401 threads the bilayer; it reads ILYVILWLVCLAFITFLCLYV. Residues 402-465 are Lumenal-facing; sequence MVWYAENYGP…DSRTINGMEK (64 aa). The segment at 446–465 is disordered; the sequence is CSTRKRRDSGDSRTINGMEK.

The protein belongs to the phosphatidyl serine synthase family.

Its subcellular location is the endoplasmic reticulum membrane. It catalyses the reaction a 1,2-diacyl-sn-glycero-3-phosphoethanolamine + L-serine = a 1,2-diacyl-sn-glycero-3-phospho-L-serine + ethanolamine. It carries out the reaction a 1,2-diacyl-sn-glycero-3-phosphocholine + L-serine = a 1,2-diacyl-sn-glycero-3-phospho-L-serine + choline. It functions in the pathway phospholipid metabolism; phosphatidylserine biosynthesis. Its function is as follows. Catalyzes a base-exchange reaction in which the polar head group of phosphatidylethanolamine (PE) or phosphatidylcholine (PC) is replaced by L-serine. Catalyzes mainly the conversion of phosphatidylcholine but also converts, in vitro and to a lesser extent, phosphatidylethanolamine. This is Phosphatidylserine synthase 1 (ptdss1) from Danio rerio (Zebrafish).